The following is a 107-amino-acid chain: UPF0145 protein MAB_3451c (107 aa).

Belongs to the UPF0145 family.

This Mycobacteroides abscessus (strain ATCC 19977 / DSM 44196 / CCUG 20993 / CIP 104536 / JCM 13569 / NCTC 13031 / TMC 1543 / L948) (Mycobacterium abscessus) protein is UPF0145 protein MAB_3451c.